Consider the following 502-residue polypeptide: Actin-binding protein WASF3 (502 aa).

A coiled-coil region spans residues 57–93; sequence NEANNFYIRANSLQDRIDRLAVKVTQLDSTVEEVSLQ. Tyr151 is modified (phosphotyrosine; by ABL1). The stretch at 162–206 forms a coiled coil; sequence KEKMLQDTEDKRKEKRRQKEQKRIDGTTREVKKVRKARNRRQEWN. Disordered stretches follow at residues 169-210 and 223-443; these read TEDK…MMAY and SVYH…ARSD. A compositionally biased stretch (basic and acidic residues) spans 182 to 192; it reads QKRIDGTTREV. The span at 223–237 shows a compositional bias: polar residues; the sequence is SVYHGASSEGSLSPD. The residue at position 248 (Tyr248) is a Phosphotyrosine; by ABL1. Positions 302-312 are enriched in pro residues; sequence QQPPPPPPPQA. A Phosphotyrosine; by ABL1 modification is found at Tyr337. Pro residues-rich tracts occupy residues 341–352 and 394–410; these read SGPPPPPPPPVI and APPPPGPPPPPPGPPGP. Residues 411-423 are compositionally biased toward low complexity; sequence GSSLSSSPMHGPP. The WH2 domain occupies 440-457; it reads ARSDLLAAIRMGIQLKKV. A Phosphotyrosine; by ABL1 modification is found at Tyr486.

Belongs to the SCAR/WAVE family. Binds actin and the Arp2/3 complex. Phosphorylation by ABL1 promotes lamellipodia formation and cell migration. Expressed in ovary and brain.

It is found in the cytoplasm. The protein localises to the cytoskeleton. Its function is as follows. Downstream effector molecules involved in the transmission of signals from tyrosine kinase receptors and small GTPases to the actin cytoskeleton. Plays a role in the regulation of cell morphology and cytoskeletal organization. Required in the control of cell shape. This Homo sapiens (Human) protein is Actin-binding protein WASF3 (WASF3).